The primary structure comprises 146 residues: Hemoglobin subunit beta (146 aa).

Residues 2-146 enclose the Globin domain; sequence HWTAEEKQLI…VAHALARKYH (145 aa). Residues histidine 63 and histidine 92 each coordinate heme b.

This sequence belongs to the globin family. As to quaternary structure, heterotetramer of two alpha chains and two beta chains. Red blood cells.

Involved in oxygen transport from the lung to the various peripheral tissues. The sequence is that of Hemoglobin subunit beta (HBB) from Chloephaga melanoptera (Andean goose).